The following is a 395-amino-acid chain: Elongation factor Tu (395 aa).

The tr-type G domain maps to 10–204 (KPHVNIGTIG…AIDNWIPLPQ (195 aa)). Residues 19–26 (GHVDHGKT) are G1. A GTP-binding site is contributed by 19–26 (GHVDHGKT). A Mg(2+)-binding site is contributed by threonine 26. The G2 stretch occupies residues 60-64 (GITIN). Residues 81–84 (DCPG) are G3. Residues 81-85 (DCPGH) and 136-139 (NKVD) contribute to the GTP site. The tract at residues 136–139 (NKVD) is G4. Positions 174 to 176 (SAL) are G5.

This sequence belongs to the TRAFAC class translation factor GTPase superfamily. Classic translation factor GTPase family. EF-Tu/EF-1A subfamily. Monomer.

Its subcellular location is the cytoplasm. It catalyses the reaction GTP + H2O = GDP + phosphate + H(+). In terms of biological role, GTP hydrolase that promotes the GTP-dependent binding of aminoacyl-tRNA to the A-site of ribosomes during protein biosynthesis. The sequence is that of Elongation factor Tu from Azobacteroides pseudotrichonymphae genomovar. CFP2.